A 395-amino-acid chain; its full sequence is Succinate--CoA ligase [ADP-forming] subunit beta (395 aa).

In terms of domain architecture, ATP-grasp spans 9–240 (RDVFEKHGVP…AASADPLEAK (232 aa)). ATP-binding positions include Lys-49, 56 to 58 (GRG), Ala-98, and Glu-103. Positions 195 and 209 each coordinate Mg(2+). Substrate-binding positions include Asn-260 and 322–324 (GIT).

Belongs to the succinate/malate CoA ligase beta subunit family. Heterotetramer of two alpha and two beta subunits. Mg(2+) serves as cofactor.

The catalysed reaction is succinate + ATP + CoA = succinyl-CoA + ADP + phosphate. The enzyme catalyses GTP + succinate + CoA = succinyl-CoA + GDP + phosphate. The protein operates within carbohydrate metabolism; tricarboxylic acid cycle; succinate from succinyl-CoA (ligase route): step 1/1. Functionally, succinyl-CoA synthetase functions in the citric acid cycle (TCA), coupling the hydrolysis of succinyl-CoA to the synthesis of either ATP or GTP and thus represents the only step of substrate-level phosphorylation in the TCA. The beta subunit provides nucleotide specificity of the enzyme and binds the substrate succinate, while the binding sites for coenzyme A and phosphate are found in the alpha subunit. The protein is Succinate--CoA ligase [ADP-forming] subunit beta of Beutenbergia cavernae (strain ATCC BAA-8 / DSM 12333 / CCUG 43141 / JCM 11478 / NBRC 16432 / NCIMB 13614 / HKI 0122).